A 416-amino-acid polypeptide reads, in one-letter code: Phosphoglycerate kinase (416 aa).

S2 carries the N-acetylserine modification. (2R)-3-phosphoglycerate is bound by residues V23, D24, F25, N26, Q38, R39, S62, H63, G65, and R66. K82 is covalently cross-linked (Glycyl lysine isopeptide (Lys-Gly) (interchain with G-Cter in ubiquitin)). Position 93 is a phosphothreonine (T93). S110 is modified (phosphoserine). L121 and R122 together coordinate (2R)-3-phosphoglycerate. Phosphoserine is present on residues S130 and S154. Positions 168 and 169 each coordinate (2R)-3-phosphoglycerate. Residue S172 is modified to Phosphoserine. K197 is covalently cross-linked (Glycyl lysine isopeptide (Lys-Gly) (interchain with G-Cter in ubiquitin)). T203 is modified (phosphothreonine). An ADP-binding site is contributed by G212. G212 contributes to the CDP binding site. The AMP site is built by A213 and K214. ATP-binding residues include A213 and K214. A213 serves as a coordination point for Mg(2+). Residues A216 and D217 each contribute to the Mg(2+) site. D217 lines the CDP pocket. K218 is a binding site for AMP. K218 contacts ATP. G236 serves as a coordination point for ADP. Residue G236 coordinates CDP. AMP is bound at residue G237. Residue G237 participates in ATP binding. T241 bears the Phosphothreonine mark. Glycyl lysine isopeptide (Lys-Gly) (interchain with G-Cter in ubiquitin) cross-links involve residues K258 and K274. Phosphothreonine is present on T298. K302 participates in a covalent cross-link: Glycyl lysine isopeptide (Lys-Gly) (interchain with G-Cter in ubiquitin). G311 contributes to the AMP binding site. The ATP site is built by G311 and L312. Phosphoserine is present on S318. T331 bears the Phosphothreonine mark. N335 is a binding site for ATP. Positions 336 and 341 each coordinate CDP. F341 contributes to the ADP binding site. Residue E342 coordinates AMP. E342 contributes to the ATP binding site. G371 is a binding site for (2R)-3-phosphoglycerate. ATP-binding residues include D373 and T374. D373 is a binding site for Mg(2+). T392 is subject to Phosphothreonine. 2 residues coordinate (2R)-3-phosphoglycerate: G394 and G395.

Belongs to the phosphoglycerate kinase family. Monomer. The cofactor is Mg(2+).

Its subcellular location is the cytoplasm. It localises to the mitochondrion. It catalyses the reaction (2R)-3-phosphoglycerate + ATP = (2R)-3-phospho-glyceroyl phosphate + ADP. It functions in the pathway carbohydrate degradation; glycolysis; pyruvate from D-glyceraldehyde 3-phosphate: step 2/5. Its function is as follows. Catalyzes one of the two ATP producing reactions in the glycolytic pathway via the reversible conversion of 1,3-diphosphoglycerate to 3-phosphoglycerate. Both L- and D- forms of purine and pyrimidine nucleotides can be used as substrates, but the activity is much lower on pyrimidines. Negatively regulates the biosynthesis of acetyl-CoA from pyruvate in the mitochondrion. This chain is Phosphoglycerate kinase (PGK1), found in Saccharomyces cerevisiae (strain ATCC 204508 / S288c) (Baker's yeast).